A 250-amino-acid polypeptide reads, in one-letter code: Proteasome subunit alpha (250 aa).

It belongs to the peptidase T1A family. The 20S proteasome core is composed of 14 alpha and 14 beta subunits that assemble into four stacked heptameric rings, resulting in a barrel-shaped structure. The two inner rings, each composed of seven catalytic beta subunits, are sandwiched by two outer rings, each composed of seven alpha subunits. The catalytic chamber with the active sites is on the inside of the barrel. Has a gated structure, the ends of the cylinder being occluded by the N-termini of the alpha-subunits. Is capped at one or both ends by the proteasome regulatory ATPase, PAN.

It localises to the cytoplasm. With respect to regulation, the formation of the proteasomal ATPase PAN-20S proteasome complex, via the docking of the C-termini of PAN into the intersubunit pockets in the alpha-rings, triggers opening of the gate for substrate entry. Interconversion between the open-gate and close-gate conformations leads to a dynamic regulation of the 20S proteasome proteolysis activity. Component of the proteasome core, a large protease complex with broad specificity involved in protein degradation. This chain is Proteasome subunit alpha, found in Methanobrevibacter smithii (strain ATCC 35061 / DSM 861 / OCM 144 / PS).